The following is a 266-amino-acid chain: 5'-nucleotidase SurE (266 aa).

D8, D9, S39, and N93 together coordinate a divalent metal cation.

Belongs to the SurE nucleotidase family. Requires a divalent metal cation as cofactor.

The protein resides in the cytoplasm. It carries out the reaction a ribonucleoside 5'-phosphate + H2O = a ribonucleoside + phosphate. Functionally, nucleotidase that shows phosphatase activity on nucleoside 5'-monophosphates. This chain is 5'-nucleotidase SurE, found in Pyrobaculum arsenaticum (strain DSM 13514 / JCM 11321 / PZ6).